The sequence spans 121 residues: Large ribosomal subunit protein uL14c (121 aa).

This sequence belongs to the universal ribosomal protein uL14 family. As to quaternary structure, part of the 50S ribosomal subunit.

It localises to the plastid. The protein localises to the chloroplast. In terms of biological role, binds to 23S rRNA. The sequence is that of Large ribosomal subunit protein uL14c from Oedogonium cardiacum (Filamentous green alga).